A 160-amino-acid polypeptide reads, in one-letter code: Protein cornichon homolog 2 (160 aa).

Over 1–10 the chain is Cytoplasmic; that stretch reads MAFTFAAFCY. A helical transmembrane segment spans residues 11–31; the sequence is MLTLVLCASLIFFVIWHIIAF. At 32–72 the chain is on the lumenal side; that stretch reads DELRTDFKNPIDQGNPARARERLKNIERICCLLRKLVVPEY. A helical membrane pass occupies residues 73–93; that stretch reads SIHGLFCLMFLCAAEWVTLGL. Topologically, residues 94-138 are cytoplasmic; the sequence is NIPLLFYHLWRYFHRPADGSEVMYDAVSIMNADILNYCQKESWCK. The helical transmembrane segment at 139 to 159 threads the bilayer; the sequence is LAFYLLSFFYYLYSMVYTLVS. Phenylalanine 160 is a topological domain (lumenal).

Belongs to the cornichon family. As to quaternary structure, acts as an auxiliary subunit for AMPA-selective glutamate receptors (AMPARs). Found in a complex with GRIA1, GRIA2, GRIA3, GRIA4, CNIH3, CACNG2, CACNG3, CACNG4, CACNG5, CACNG7 and CACNG8. Interacts with CACGN8. Interacts with GRIA1. Found in a complex with GRIA1, GRIA2, GRIA3, GRIA4, DLG4 and CACNG8. Expression is up-regulated in dorsolateral prefrontal cortex of patients with schizophrenia (postmortem brain study).

It is found in the endoplasmic reticulum membrane. The protein resides in the postsynaptic cell membrane. It localises to the cell projection. The protein localises to the dendrite. Its subcellular location is the dendritic spine. It is found in the postsynaptic density. Its function is as follows. Regulates the trafficking and gating properties of AMPA-selective glutamate receptors (AMPARs). Promotes their targeting to the cell membrane and synapses and modulates their gating properties by regulating their rates of activation, deactivation and desensitization. Blocks CACNG8-mediated resensitization of AMPA receptors. The chain is Protein cornichon homolog 2 from Homo sapiens (Human).